Here is a 293-residue protein sequence, read N- to C-terminus: Acetyl-coenzyme A carboxylase carboxyl transferase subunit beta (293 aa).

Residues 29 to 293 (LWVKCSECSQ…GVNELVEANI (265 aa)) form the CoA carboxyltransferase N-terminal domain. Zn(2+) is bound by residues C33, C36, C52, and C55. A C4-type zinc finger spans residues 33–55 (CSECSQVAYRKDLISNFNVCSNC).

This sequence belongs to the AccD/PCCB family. As to quaternary structure, acetyl-CoA carboxylase is a heterohexamer composed of biotin carboxyl carrier protein (AccB), biotin carboxylase (AccC) and two subunits each of ACCase subunit alpha (AccA) and ACCase subunit beta (AccD). It depends on Zn(2+) as a cofactor.

The protein resides in the cytoplasm. The enzyme catalyses N(6)-carboxybiotinyl-L-lysyl-[protein] + acetyl-CoA = N(6)-biotinyl-L-lysyl-[protein] + malonyl-CoA. Its pathway is lipid metabolism; malonyl-CoA biosynthesis; malonyl-CoA from acetyl-CoA: step 1/1. In terms of biological role, component of the acetyl coenzyme A carboxylase (ACC) complex. Biotin carboxylase (BC) catalyzes the carboxylation of biotin on its carrier protein (BCCP) and then the CO(2) group is transferred by the transcarboxylase to acetyl-CoA to form malonyl-CoA. The protein is Acetyl-coenzyme A carboxylase carboxyl transferase subunit beta of Prochlorococcus marinus (strain MIT 9215).